The primary structure comprises 584 residues: uncharacterized protein (584 aa).

The first 27 residues, 1 to 27 (MGLSRKKIFTWPLLLTGMAVVSTTFSS), serve as a signal peptide directing secretion. The N-palmitoyl cysteine moiety is linked to residue C28. A lipid anchor (S-diacylglycerol cysteine) is attached at C28. The disordered stretch occupies residues 530-570 (NLPKKEGSTNQANQQTNQTNRSTDATKKDSSSDETNKNPLA). Residues 538 to 552 (TNQANQQTNQTNRST) show a composition bias toward low complexity. A compositionally biased stretch (basic and acidic residues) spans 553 to 565 (DATKKDSSSDETN).

Belongs to the MG067/MG068/MG395 family.

Its subcellular location is the cell membrane. This is an uncharacterized protein from Mycoplasmoides gallisepticum (strain R(low / passage 15 / clone 2)) (Mycoplasma gallisepticum).